We begin with the raw amino-acid sequence, 209 residues long: Urease accessory protein UreG (209 aa).

Position 16 to 23 (16 to 23 (GPVGSGKT)) interacts with GTP.

This sequence belongs to the SIMIBI class G3E GTPase family. UreG subfamily. As to quaternary structure, homodimer. UreD, UreF and UreG form a complex that acts as a GTP-hydrolysis-dependent molecular chaperone, activating the urease apoprotein by helping to assemble the nickel containing metallocenter of UreC. The UreE protein probably delivers the nickel.

The protein resides in the cytoplasm. Its function is as follows. Facilitates the functional incorporation of the urease nickel metallocenter. This process requires GTP hydrolysis, probably effectuated by UreG. This Blochmanniella floridana protein is Urease accessory protein UreG.